Here is a 942-residue protein sequence, read N- to C-terminus: Protein inturned (942 aa).

Residues 1–13 (MADPARRDPRGRA) are compositionally biased toward basic and acidic residues. Disordered regions lie at residues 1-54 (MADP…LEPE) and 129-150 (PKRH…KHQS). Residues 22-32 (SQEEEEEESDS) are compositionally biased toward acidic residues. The segment covering 33-48 (DAGASSLGSCSSASSD) has biased composition (low complexity). Residues 138–150 (SNTGPVSILKHQS) show a composition bias toward polar residues. The 79-residue stretch at 189 to 267 (LVGVIHQTKW…PMQVKLTFEN (79 aa)) folds into the PDZ domain. Phosphoserine occurs at positions 674 and 678. A disordered region spans residues 707–752 (KARKPSPSRIGGGREPGEGEENVGLSPHTTPDTVRKQRESEGSDDN).

It belongs to the inturned family. As to quaternary structure, component of the CPLANE (ciliogenesis and planar polarity effectors) complex, composed of INTU, FUZ and WDPCP. Interacts with CPLANE1. Interacts with NPHP4 and DAAM1; INTU is mediating the interaction between NPHP4 and DAAM1.

It localises to the cytoplasm. The protein localises to the cell surface. The protein resides in the cytoskeleton. Its subcellular location is the cilium basal body. It is found in the microtubule organizing center. It localises to the centrosome. The protein localises to the centriole. Plays a key role in ciliogenesis and embryonic development. Regulator of cilia formation by controlling the organization of the apical actin cytoskeleton and the positioning of the basal bodies at the apical cell surface, which in turn is essential for the normal orientation of elongating ciliary microtubules. Plays a key role in definition of cell polarity via its role in ciliogenesis but not via conversion extension. Has an indirect effect on hedgehog signaling. Proposed to function as core component of the CPLANE (ciliogenesis and planar polarity effectors) complex involved in the recruitment of peripheral IFT-A proteins to basal bodies. Required for recruitment of CPLANE2 to the mother centriole. Binds phosphatidylinositol 3-phosphate with highest affinity, followed by phosphatidylinositol 4-phosphate and phosphatidylinositol 5-phosphate. The protein is Protein inturned (Intu) of Rattus norvegicus (Rat).